Consider the following 81-residue polypeptide: ATP synthase subunit c (81 aa).

Transmembrane regions (helical) follow at residues 7–27 (AASVVAAGLAVGLAAIGPGIG) and 57–77 (LAFMESLTIYGLVVALVLLFA).

The protein belongs to the ATPase C chain family. F-type ATPases have 2 components, F(1) - the catalytic core - and F(0) - the membrane proton channel. F(1) has five subunits: alpha(3), beta(3), gamma(1), delta(1), epsilon(1). F(0) has four main subunits: a(1), b(1), b'(1) and c(10-14). The alpha and beta chains form an alternating ring which encloses part of the gamma chain. F(1) is attached to F(0) by a central stalk formed by the gamma and epsilon chains, while a peripheral stalk is formed by the delta, b and b' chains.

The protein resides in the cellular thylakoid membrane. F(1)F(0) ATP synthase produces ATP from ADP in the presence of a proton or sodium gradient. F-type ATPases consist of two structural domains, F(1) containing the extramembraneous catalytic core and F(0) containing the membrane proton channel, linked together by a central stalk and a peripheral stalk. During catalysis, ATP synthesis in the catalytic domain of F(1) is coupled via a rotary mechanism of the central stalk subunits to proton translocation. Its function is as follows. Key component of the F(0) channel; it plays a direct role in translocation across the membrane. A homomeric c-ring of between 10-14 subunits forms the central stalk rotor element with the F(1) delta and epsilon subunits. The polypeptide is ATP synthase subunit c (Synechococcus sp. (strain CC9311)).